Reading from the N-terminus, the 303-residue chain is Short chain dehydrogenase pigC (303 aa).

Ile-45, Asp-103, Asn-130, Arg-164, Tyr-196, Lys-200, and Thr-231 together coordinate NADP(+). The Proton donor role is filled by Tyr-196. The active-site Lowers pKa of active site Tyr is Lys-200.

Belongs to the short-chain dehydrogenases/reductases (SDR) family.

Its pathway is secondary metabolite biosynthesis. Its function is as follows. Short chain dehydrogenase; part of the gene cluster that mediates the biosynthesis of azaphilone pigments (MonAzPs), a complex mixture of compounds with a common azaphilone skeleton very widely used as food colorants. Within the pathway, pigC intercepts the very reactive benzaldehyde produced by the nrPKS pigA to reduce the omega-1 carbonyl to the alcohol to provide the first stable enzyme-free MonAzPs intermediate, 6-(4-hydroxy-2-oxopentyl)-3-methyl-2,4-dioxocyclohexane carbaldehyde, also known as M7PKS-1. The first step of the pathway is performed by the nrPKS pigA that forms the hexaketide precursor from successive condensations of five malonyl-CoA units, with a simple acetyl-CoA starter unit. The role of esterase pigG is not clear, but it may play at most a supplementary role in the formation of the benzaldehyde produced by the pigA nrPKS. This very reactive benzaldehyde is intercepted by the pigC ketoreductase that to provide the first stable enzyme-free MonAzPs intermediate, M7PKS-1. The FAD-dependent monooxygenase pigN hydroxylates M7PKS-1 at C-4, which triggers the formation of the pyran ring. PigJ, pigK and pigD are involved in the acetylation of the pyran ring. PigJ and pigK form the two subunits of a dedicated fungal FAS that produces the side chain fatty acyl moiety of MonAzPs and pigD transfers the fatty acyl chain to the C-4 alcohol. PigM and pigO are involved in the elimination of the omega-1 alcohol. PigM acts as an O-acetyltransferase that synthesizes the putative O-11 acetyl intermediate whereas pigO eliminates acetic acid to yield an intermediate with a C10(11) double bond. The dehydration of the C-11 alcohol followed by the reduction of the C6(7) double bond by the NAD(P)H-dependent oxidoreductase pigE increases the electrophilicity of the C-5 ketone of the resulting acyl benzopyran. This in turn sets up the C-5 ketone for an intramolecular Knoevenagel aldol condensation with the C-20 enol of the side chain. This condensation affords the characteristic linear tricyclic carbon skeletons of the yellow pigments that serve as the common precursors for the classical yellow pigments monascin and ankaflavin, orange pigments rubopunctatin and monascorubrin, and red pigments ribropunctamine and monascorubramine. The FAD-dependent oxidoreductase pigF is especially invoved in the biosynthesis of orange and red pigments via desaturation of C6(7). In Monascus ruber (Mold), this protein is Short chain dehydrogenase pigC.